The primary structure comprises 154 residues: Ribosome maturation factor RimP (154 aa).

This sequence belongs to the RimP family.

The protein localises to the cytoplasm. Functionally, required for maturation of 30S ribosomal subunits. The polypeptide is Ribosome maturation factor RimP (Acetivibrio thermocellus (strain ATCC 27405 / DSM 1237 / JCM 9322 / NBRC 103400 / NCIMB 10682 / NRRL B-4536 / VPI 7372) (Clostridium thermocellum)).